Here is a 61-residue protein sequence, read N- to C-terminus: Transcription elongation factor Spt4 (61 aa).

4 residues coordinate Zn(2+): cysteine 6, cysteine 9, cysteine 18, and cysteine 21.

This sequence belongs to the archaeal Spt4 family. Heterodimer composed of Spt4 and Spt5.

Its function is as follows. Stimulates transcription elongation. The polypeptide is Transcription elongation factor Spt4 (Pyrococcus furiosus (strain ATCC 43587 / DSM 3638 / JCM 8422 / Vc1)).